A 122-amino-acid chain; its full sequence is MSIRTGKVSSLLQKELSSIFEKELPRSGPLLTIVEVKVTADLGIARVYVSLIGSEKERGLLMEHLQNETKYIRKLLSSRIRHQFRRIPELEFYEDEQYDKARRIEELLKEALNRPGEEQTES.

This sequence belongs to the RbfA family. Monomer. Binds 30S ribosomal subunits, but not 50S ribosomal subunits or 70S ribosomes.

The protein resides in the cytoplasm. One of several proteins that assist in the late maturation steps of the functional core of the 30S ribosomal subunit. Associates with free 30S ribosomal subunits (but not with 30S subunits that are part of 70S ribosomes or polysomes). Required for efficient processing of 16S rRNA. May interact with the 5'-terminal helix region of 16S rRNA. This chain is Ribosome-binding factor A, found in Prosthecochloris aestuarii (strain DSM 271 / SK 413).